A 369-amino-acid chain; its full sequence is Biglycan (369 aa).

Positions 1 to 16 (MRPLWLLTLLLALSQA) are cleaved as a signal peptide. The propeptide occupies 17–37 (LPFEQKGFWDFTLDDGLLMMN). Residues Ser42 and Ser48 are each glycosylated (O-linked (Xyl...) (glycosaminoglycan) serine). Disulfide bonds link Cys64–Cys70 and Cys68–Cys77. 12 LRR repeats span residues 83 to 103 (KTVPKEISPDTTLLDLQNNDI), 104 to 127 (SELRKDDFKGLQHLYALVLVNNKI), 128 to 151 (SKIHEKAFSPLRKLQKLYISKNHL), 152 to 172 (VEIPPNLPSSLVELRIHDNRI), 173 to 196 (RKVPKGVFSGLRNMNCIEMGGNPL), 197 to 221 (ENSGFEPGAFDGLKLNYLRISEAKL), 222 to 242 (TGIPKDLPETLNELHLDHNKI), 243 to 266 (QAIELEDLLRYSKLYRLGLGHNQI), 267 to 290 (RMIENGSLSFLPTLRELHLDNNKL), 291 to 313 (SRVPAGLPDLKLLQVVYLHSNNI), 314 to 343 (TKVGINDFCPMGFGVKRAYYNGISLFNNPV), and 344 to 369 (PYWEVQPATFRCVTDRLAIQFGNYKK). Residues Asn271 and Asn312 are each glycosylated (N-linked (GlcNAc...) asparagine). Cys322 and Cys355 form a disulfide bridge.

This sequence belongs to the small leucine-rich proteoglycan (SLRP) family. SLRP class I subfamily. In terms of assembly, homodimer. Forms a ternary complex with MFAP2 and ELN. The two attached glycosaminoglycan chains can be either chondroitin sulfate or dermatan sulfate. In terms of tissue distribution, found in several connective tissues, especially in articular cartilages.

The protein resides in the secreted. Its subcellular location is the extracellular space. It localises to the extracellular matrix. In terms of biological role, may be involved in collagen fiber assembly. This is Biglycan (Bgn) from Rattus norvegicus (Rat).